Reading from the N-terminus, the 61-residue chain is Small ribosomal subunit protein uS14 (61 aa).

Cysteine 24, cysteine 27, cysteine 40, and cysteine 43 together coordinate Zn(2+).

It belongs to the universal ribosomal protein uS14 family. Zinc-binding uS14 subfamily. Part of the 30S ribosomal subunit. Contacts proteins S3 and S10. Zn(2+) serves as cofactor.

In terms of biological role, binds 16S rRNA, required for the assembly of 30S particles and may also be responsible for determining the conformation of the 16S rRNA at the A site. This Clostridium kluyveri (strain NBRC 12016) protein is Small ribosomal subunit protein uS14.